The chain runs to 436 residues: GTPase Der (436 aa).

2 consecutive EngA-type G domains span residues 4–167 and 175–351; these read PTVA…PNEI and IKFS…HAQN. GTP is bound by residues 10–17, 57–61, 119–122, 181–188, 229–233, and 294–297; these read GRPNVGKS, DTGGI, NKVD, DTAGM, and NKWD. One can recognise a KH-like domain in the interval 352–436; the sequence is LRISSSVLND…PVHLIARKRK (85 aa).

It belongs to the TRAFAC class TrmE-Era-EngA-EngB-Septin-like GTPase superfamily. EngA (Der) GTPase family. As to quaternary structure, associates with the 50S ribosomal subunit.

Functionally, GTPase that plays an essential role in the late steps of ribosome biogenesis. This chain is GTPase Der, found in Lactococcus lactis subsp. lactis (strain IL1403) (Streptococcus lactis).